A 1435-amino-acid polypeptide reads, in one-letter code: Gag-Pol polyprotein (1435 aa).

A lipid anchor (N-myristoyl glycine; by host) is attached at glycine 2. The segment at 7 to 31 (VLTGSKLDAWEQIRLKPGSKKKYRL) is interaction with Gp41. An interaction with host CALM1 region spans residues 8 to 43 (LTGSKLDAWEQIRLKPGSKKKYRLKHLVWASRELER). Residues 12 to 19 (KLDAWEQI) are interaction with host AP3D1. The tract at residues 14-33 (DAWEQIRLKPGSKKKYRLKH) is interaction with membrane phosphatidylinositol 4,5-bisphosphate and RNA. Residues 16 to 22 (WEQIRLK) carry the Nuclear export signal motif. The Nuclear localization signal motif lies at 26 to 32 (KKKYRLK). The interval 73-77 (DSLQS) is interaction with membrane phosphatidylinositol 4,5-bisphosphate. Phosphotyrosine; by host is present on tyrosine 130. The tract at residues 187-225 (NAIGGHQGALQVLKEVINEEAVEWDRTHPPPVGPLPPGQ) is interaction with human PPIA/CYPA and NUP153. A disordered region spans residues 212–232 (RTHPPPVGPLPPGQIREPTGS). The tract at residues 276-362 (YSPVSILDIK…GGPTHKARVL (87 aa)) is dimerization/Multimerization of capsid protein p24. 2 CCHC-type zinc fingers span residues 394–411 (IKCFNCGKEGHIARNCRA) and 415–432 (KGCWKCGQEGHQMKDCRN). Residues 455 to 480 (TSTPISPTDGGGSEGTGESGTERGPE) are disordered. Residues 463–472 (DGGGSEGTGE) show a composition bias toward gly residues. The dimerization of protease stretch occupies residues 488–492 (PQIPL). The Peptidase A2 domain occupies 507–576 (CEVLLDTGAD…TPVNIIGRNI (70 aa)). The active-site For protease activity; shared with dimeric partner is aspartate 512. Dimerization of protease stretches follow at residues 536-542 (GIGGFIK) and 575-587 (NILTGLGCTLNFP). Residues 630-820 (EGKISRIGPE…PPFLWMGYEL (191 aa)) form the Reverse transcriptase domain. Aspartate 696, aspartate 771, and aspartate 772 together coordinate Mg(2+). The RT 'primer grip' stretch occupies residues 813–821 (FLWMGYELH). Residues 984 to 1000 (WETWWADYWQATWIPEW) carry the Tryptophan repeat motif motif. Residues 1020-1143 (IMGAETYYVD…IDKLVSKDIR (124 aa)) form the RNase H type-1 domain. Residues aspartate 1029, glutamate 1064, aspartate 1084, and aspartate 1135 each contribute to the Mg(2+) site. An Integrase-type zinc finger spans residues 1149-1190 (EGIDQAQEDHEKYHSNWKALASEFGLPPVVAKEIIASCPKCH). Zn(2+) is bound by residues histidine 1158, histidine 1162, cysteine 1186, and cysteine 1189. Positions 1200-1350 (VDCSPEVWQI…TAGERIIDIL (151 aa)) constitute an Integrase catalytic domain. Positions 1210, 1262, and 1298 each coordinate Mg(2+). Residues 1369–1416 (FRVYYRDSRDPIWKGPAQLLWKGEGAVVIQDKGDIKVVPRRKAKIIRE) constitute a DNA-binding region (integrase-type).

In terms of assembly, homotrimer; further assembles as hexamers of trimers. Interacts with gp41 (via C-terminus). Interacts with host CALM1; this interaction induces a conformational change in the Matrix protein, triggering exposure of the myristate group. Interacts with host AP3D1; this interaction allows the polyprotein trafficking to multivesicular bodies during virus assembly. Part of the pre-integration complex (PIC) which is composed of viral genome, matrix protein, Vpr and integrase. As to quaternary structure, homodimer; the homodimer further multimerizes as homohexamers or homopentamers. Interacts with human PPIA/CYPA; This interaction stabilizes the capsid. Interacts with human NUP153. Interacts with host PDZD8; this interaction stabilizes the capsid. Interacts with monkey TRIM5; this interaction destabilizes the capsid. Homodimer, whose active site consists of two apposed aspartic acid residues. In terms of assembly, heterodimer of p66 RT and p51 RT (RT p66/p51). Heterodimerization of RT is essential for DNA polymerase activity. The overall folding of the subdomains is similar in p66 RT and p51 RT but the spatial arrangements of the subdomains are dramatically different. As to quaternary structure, homotetramer; may further associate as a homohexadecamer. Part of the pre-integration complex (PIC) which is composed of viral genome, matrix protein, Vpr and integrase. Interacts with human SMARCB1/INI1 and human PSIP1/LEDGF isoform 1. Interacts with human KPNA3; this interaction might play a role in nuclear import of the pre-integration complex. Interacts with human NUP153; this interaction might play a role in nuclear import of the pre-integration complex. The cofactor is Mg(2+). Specific enzymatic cleavages by the viral protease yield mature proteins. The protease is released by autocatalytic cleavage. The polyprotein is cleaved during and after budding, this process is termed maturation. Proteolytic cleavage of p66 RT removes the RNase H domain to yield the p51 RT subunit. Nucleocapsid protein p7 might be further cleaved after virus entry. Post-translationally, tyrosine phosphorylated presumably in the virion by a host kinase. Phosphorylation is apparently not a major regulator of membrane association. In terms of processing, phosphorylated possibly by host MAPK1; this phosphorylation is necessary for Pin1-mediated virion uncoating. Methylated by host PRMT6, impairing its function by reducing RNA annealing and the initiation of reverse transcription.

Its subcellular location is the host cell membrane. The protein resides in the host endosome. It is found in the host multivesicular body. It localises to the virion membrane. The protein localises to the host nucleus. Its subcellular location is the host cytoplasm. The protein resides in the virion. It carries out the reaction Specific for a P1 residue that is hydrophobic, and P1' variable, but often Pro.. It catalyses the reaction Endohydrolysis of RNA in RNA/DNA hybrids. Three different cleavage modes: 1. sequence-specific internal cleavage of RNA. Human immunodeficiency virus type 1 and Moloney murine leukemia virus enzymes prefer to cleave the RNA strand one nucleotide away from the RNA-DNA junction. 2. RNA 5'-end directed cleavage 13-19 nucleotides from the RNA end. 3. DNA 3'-end directed cleavage 15-20 nucleotides away from the primer terminus.. The catalysed reaction is 3'-end directed exonucleolytic cleavage of viral RNA-DNA hybrid.. The enzyme catalyses DNA(n) + a 2'-deoxyribonucleoside 5'-triphosphate = DNA(n+1) + diphosphate. Protease: The viral protease is inhibited by many synthetic protease inhibitors (PIs), such as amprenavir, atazanavir, indinavir, loprinavir, nelfinavir, ritonavir and saquinavir. Use of protease inhibitors in tritherapy regimens permit more ambitious therapeutic strategies. Reverse transcriptase/ribonuclease H: RT can be inhibited either by nucleoside RT inhibitors (NRTIs) or by non nucleoside RT inhibitors (NNRTIs). NRTIs act as chain terminators, whereas NNRTIs inhibit DNA polymerization by binding a small hydrophobic pocket near the RT active site and inducing an allosteric change in this region. Classical NRTIs are abacavir, adefovir (PMEA), didanosine (ddI), lamivudine (3TC), stavudine (d4T), tenofovir (PMPA), zalcitabine (ddC), and zidovudine (AZT). Classical NNRTIs are atevirdine (BHAP U-87201E), delavirdine, efavirenz (DMP-266), emivirine (I-EBU), and nevirapine (BI-RG-587). The tritherapies used as a basic effective treatment of AIDS associate two NRTIs and one NNRTI. Functionally, mediates, with Gag polyprotein, the essential events in virion assembly, including binding the plasma membrane, making the protein-protein interactions necessary to create spherical particles, recruiting the viral Env proteins, and packaging the genomic RNA via direct interactions with the RNA packaging sequence (Psi). Gag-Pol polyprotein may regulate its own translation, by the binding genomic RNA in the 5'-UTR. At low concentration, the polyprotein would promote translation, whereas at high concentration, the polyprotein would encapsidate genomic RNA and then shut off translation. In terms of biological role, targets the polyprotein to the plasma membrane via a multipartite membrane-binding signal, that includes its myristoylated N-terminus. Matrix protein is part of the pre-integration complex. Implicated in the release from host cell mediated by Vpu. Binds to RNA. Forms the conical core that encapsulates the genomic RNA-nucleocapsid complex in the virion. Most core are conical, with only 7% tubular. The core is constituted by capsid protein hexamer subunits. The core is disassembled soon after virion entry. Host restriction factors such as TRIM5-alpha or TRIMCyp bind retroviral capsids and cause premature capsid disassembly, leading to blocks in reverse transcription. Capsid restriction by TRIM5 is one of the factors which restricts HIV-1 to the human species. Host PIN1 apparently facilitates the virion uncoating. On the other hand, interactions with PDZD8 or CYPA stabilize the capsid. Its function is as follows. Encapsulates and protects viral dimeric unspliced genomic RNA (gRNA). Binds these RNAs through its zinc fingers. Acts as a nucleic acid chaperone which is involved in rearangement of nucleic acid secondary structure during gRNA retrotranscription. Also facilitates template switch leading to recombination. As part of the polyprotein, participates in gRNA dimerization, packaging, tRNA incorporation and virion assembly. Functionally, aspartyl protease that mediates proteolytic cleavages of Gag and Gag-Pol polyproteins during or shortly after the release of the virion from the plasma membrane. Cleavages take place as an ordered, step-wise cascade to yield mature proteins. This process is called maturation. Displays maximal activity during the budding process just prior to particle release from the cell. Also cleaves Nef and Vif, probably concomitantly with viral structural proteins on maturation of virus particles. Hydrolyzes host EIF4GI and PABP1 in order to shut off the capped cellular mRNA translation. The resulting inhibition of cellular protein synthesis serves to ensure maximal viral gene expression and to evade host immune response. Also mediates cleavage of host YTHDF3. Mediates cleavage of host CARD8, thereby activating the CARD8 inflammasome, leading to the clearance of latent HIV-1 in patient CD4(+) T-cells after viral reactivation; in contrast, HIV-1 can evade CARD8-sensing when its protease remains inactive in infected cells prior to viral budding. In terms of biological role, multifunctional enzyme that converts the viral RNA genome into dsDNA in the cytoplasm, shortly after virus entry into the cell. This enzyme displays a DNA polymerase activity that can copy either DNA or RNA templates, and a ribonuclease H (RNase H) activity that cleaves the RNA strand of RNA-DNA heteroduplexes in a partially processive 3' to 5' endonucleasic mode. Conversion of viral genomic RNA into dsDNA requires many steps. A tRNA(3)-Lys binds to the primer-binding site (PBS) situated at the 5'-end of the viral RNA. RT uses the 3' end of the tRNA primer to perform a short round of RNA-dependent minus-strand DNA synthesis. The reading proceeds through the U5 region and ends after the repeated (R) region which is present at both ends of viral RNA. The portion of the RNA-DNA heteroduplex is digested by the RNase H, resulting in a ssDNA product attached to the tRNA primer. This ssDNA/tRNA hybridizes with the identical R region situated at the 3' end of viral RNA. This template exchange, known as minus-strand DNA strong stop transfer, can be either intra- or intermolecular. RT uses the 3' end of this newly synthesized short ssDNA to perform the RNA-dependent minus-strand DNA synthesis of the whole template. RNase H digests the RNA template except for two polypurine tracts (PPTs) situated at the 5'-end and near the center of the genome. It is not clear if both polymerase and RNase H activities are simultaneous. RNase H probably can proceed both in a polymerase-dependent (RNA cut into small fragments by the same RT performing DNA synthesis) and a polymerase-independent mode (cleavage of remaining RNA fragments by free RTs). Secondly, RT performs DNA-directed plus-strand DNA synthesis using the PPTs that have not been removed by RNase H as primers. PPTs and tRNA primers are then removed by RNase H. The 3' and 5' ssDNA PBS regions hybridize to form a circular dsDNA intermediate. Strand displacement synthesis by RT to the PBS and PPT ends produces a blunt ended, linear dsDNA copy of the viral genome that includes long terminal repeats (LTRs) at both ends. Catalyzes viral DNA integration into the host chromosome, by performing a series of DNA cutting and joining reactions. This enzyme activity takes place after virion entry into a cell and reverse transcription of the RNA genome in dsDNA. The first step in the integration process is 3' processing. This step requires a complex comprising the viral genome, matrix protein, Vpr and integrase. This complex is called the pre-integration complex (PIC). The integrase protein removes 2 nucleotides from each 3' end of the viral DNA, leaving recessed CA OH's at the 3' ends. In the second step, the PIC enters cell nucleus. This process is mediated through integrase and Vpr proteins, and allows the virus to infect a non dividing cell. This ability to enter the nucleus is specific of lentiviruses, other retroviruses cannot and rely on cell division to access cell chromosomes. In the third step, termed strand transfer, the integrase protein joins the previously processed 3' ends to the 5' ends of strands of target cellular DNA at the site of integration. The 5'-ends are produced by integrase-catalyzed staggered cuts, 5 bp apart. A Y-shaped, gapped, recombination intermediate results, with the 5'-ends of the viral DNA strands and the 3' ends of target DNA strands remaining unjoined, flanking a gap of 5 bp. The last step is viral DNA integration into host chromosome. This involves host DNA repair synthesis in which the 5 bp gaps between the unjoined strands are filled in and then ligated. Since this process occurs at both cuts flanking the HIV genome, a 5 bp duplication of host DNA is produced at the ends of HIV-1 integration. Alternatively, Integrase may catalyze the excision of viral DNA just after strand transfer, this is termed disintegration. This Human immunodeficiency virus type 1 group O (isolate ANT70) (HIV-1) protein is Gag-Pol polyprotein (gag-pol).